The chain runs to 275 residues: 4-diphosphocytidyl-2-C-methyl-D-erythritol kinase (275 aa).

Lysine 9 is an active-site residue. 90 to 100 (PVGGGLGGGSS) contacts ATP. Residue aspartate 132 is part of the active site.

It belongs to the GHMP kinase family. IspE subfamily.

It catalyses the reaction 4-CDP-2-C-methyl-D-erythritol + ATP = 4-CDP-2-C-methyl-D-erythritol 2-phosphate + ADP + H(+). Its pathway is isoprenoid biosynthesis; isopentenyl diphosphate biosynthesis via DXP pathway; isopentenyl diphosphate from 1-deoxy-D-xylulose 5-phosphate: step 3/6. Catalyzes the phosphorylation of the position 2 hydroxy group of 4-diphosphocytidyl-2C-methyl-D-erythritol. In Sulfurihydrogenibium sp. (strain YO3AOP1), this protein is 4-diphosphocytidyl-2-C-methyl-D-erythritol kinase.